The sequence spans 374 residues: 5-methylthioribulose-1-phosphate isomerase (374 aa).

It belongs to the RuBisCO large chain family. Type IV subfamily.

The catalysed reaction is 5-(methylsulfanyl)-D-ribulose 1-phosphate = S-methyl-1-thio-D-xylulose 5-phosphate. The enzyme catalyses 5-(methylsulfanyl)-D-ribulose 1-phosphate = 1-(methylsulfanyl)ribulose 5-phosphate. It participates in amino-acid biosynthesis; L-methionine biosynthesis via salvage pathway. Its pathway is metabolic intermediate biosynthesis; 1-deoxy-D-xylulose 5-phosphate biosynthesis. In terms of biological role, catalyzes the conversion of 5-methylthio-D-ribulose 1-phosphate (MTRu-1P) to a 3:1 mixture of 1-methylthioxylulose 5-phosphate (MTXu-5P) and 1-methylthioribulose 5-phosphate (MTRu-5P). Involved in the MTA-isoprenoid shunt of the methionine salvage pathway. The chain is 5-methylthioribulose-1-phosphate isomerase from Rhodospirillum rubrum (strain ATCC 11170 / ATH 1.1.1 / DSM 467 / LMG 4362 / NCIMB 8255 / S1).